A 211-amino-acid chain; its full sequence is Thiamine-phosphate synthase (211 aa).

Residues 35–39 and Asn67 contribute to the 4-amino-2-methyl-5-(diphosphooxymethyl)pyrimidine site; that span reads QLRDK. The Mg(2+) site is built by Asp68 and Asp87. Ser106 is a binding site for 4-amino-2-methyl-5-(diphosphooxymethyl)pyrimidine. A 2-[(2R,5Z)-2-carboxy-4-methylthiazol-5(2H)-ylidene]ethyl phosphate-binding site is contributed by 132 to 134; sequence TGS. Lys135 serves as a coordination point for 4-amino-2-methyl-5-(diphosphooxymethyl)pyrimidine. 2-[(2R,5Z)-2-carboxy-4-methylthiazol-5(2H)-ylidene]ethyl phosphate is bound by residues Gly163 and 183–184; that span reads IS.

This sequence belongs to the thiamine-phosphate synthase family. The cofactor is Mg(2+).

The catalysed reaction is 2-[(2R,5Z)-2-carboxy-4-methylthiazol-5(2H)-ylidene]ethyl phosphate + 4-amino-2-methyl-5-(diphosphooxymethyl)pyrimidine + 2 H(+) = thiamine phosphate + CO2 + diphosphate. It carries out the reaction 2-(2-carboxy-4-methylthiazol-5-yl)ethyl phosphate + 4-amino-2-methyl-5-(diphosphooxymethyl)pyrimidine + 2 H(+) = thiamine phosphate + CO2 + diphosphate. It catalyses the reaction 4-methyl-5-(2-phosphooxyethyl)-thiazole + 4-amino-2-methyl-5-(diphosphooxymethyl)pyrimidine + H(+) = thiamine phosphate + diphosphate. Its pathway is cofactor biosynthesis; thiamine diphosphate biosynthesis; thiamine phosphate from 4-amino-2-methyl-5-diphosphomethylpyrimidine and 4-methyl-5-(2-phosphoethyl)-thiazole: step 1/1. Functionally, condenses 4-methyl-5-(beta-hydroxyethyl)thiazole monophosphate (THZ-P) and 2-methyl-4-amino-5-hydroxymethyl pyrimidine pyrophosphate (HMP-PP) to form thiamine monophosphate (TMP). This Methanoculleus marisnigri (strain ATCC 35101 / DSM 1498 / JR1) protein is Thiamine-phosphate synthase.